The primary structure comprises 96 residues: Citrate lyase acyl carrier protein (96 aa).

An O-(phosphoribosyl dephospho-coenzyme A)serine modification is found at S14.

It belongs to the CitD family. Oligomer with a subunit composition of (alpha,beta,gamma)6.

The protein resides in the cytoplasm. In terms of biological role, covalent carrier of the coenzyme of citrate lyase. This chain is Citrate lyase acyl carrier protein, found in Pectobacterium atrosepticum (strain SCRI 1043 / ATCC BAA-672) (Erwinia carotovora subsp. atroseptica).